The following is a 558-amino-acid chain: D-xylose-proton symporter-like 3, chloroplastic (558 aa).

The transit peptide at methionine 1–serine 31 directs the protein to the chloroplast. 12 helical membrane-spanning segments follow: residues valine 98 to alanine 118, leucine 146 to alanine 166, leucine 175 to leucine 195, isoleucine 197 to proline 217, leucine 238 to valine 258, methionine 264 to alanine 284, alanine 359 to leucine 379, valine 400 to aspartate 420, proline 426 to tyrosine 446, leucine 449 to isoleucine 469, glycine 491 to serine 511, and leucine 522 to proline 542.

The protein belongs to the major facilitator superfamily. Sugar transporter (TC 2.A.1.1) family.

Its subcellular location is the plastid. The protein localises to the chloroplast membrane. In Arabidopsis thaliana (Mouse-ear cress), this protein is D-xylose-proton symporter-like 3, chloroplastic.